We begin with the raw amino-acid sequence, 40 residues long: Photosystem II reaction center protein J (40 aa).

Position 2 is an N-acetylmethionine (M2). Residues 2-11 (MSEGGRIPLW) lie on the Cytoplasmic side of the membrane. The helical transmembrane segment at 12–26 (IVATVAGMGVIVIVG) threads the bilayer. Residues 27–40 (LFFYGAYAGLGSSL) lie on the Lumenal side of the membrane.

It belongs to the PsbJ family. PSII is composed of 1 copy each of membrane proteins PsbA, PsbB, PsbC, PsbD, PsbE, PsbF, PsbH, PsbI, PsbJ, PsbK, PsbL, PsbM, PsbT, PsbX, PsbY, PsbZ, Psb30/Ycf12, peripheral proteins PsbO, CyanoQ (PsbQ), PsbU, PsbV and a large number of cofactors. It forms dimeric complexes. It depends on PSII binds multiple chlorophylls, carotenoids and specific lipids. as a cofactor.

It is found in the cellular thylakoid membrane. One of the components of the core complex of photosystem II (PSII). PSII is a light-driven water:plastoquinone oxidoreductase that uses light energy to abstract electrons from H(2)O, generating O(2) and a proton gradient subsequently used for ATP formation. It consists of a core antenna complex that captures photons, and an electron transfer chain that converts photonic excitation into a charge separation. In terms of biological role, may play a regulatory role in PSII biogenesis. In Thermosynechococcus vestitus (strain NIES-2133 / IAM M-273 / BP-1), this protein is Photosystem II reaction center protein J.